The primary structure comprises 301 residues: Protoheme IX farnesyltransferase (301 aa).

Transmembrane regions (helical) follow at residues 25-45 (VTQL…PGMV), 47-67 (WTPL…AFAI), 97-117 (ILLF…TFAN), 119-139 (LTMW…TLLL), 147-167 (IVIG…AVTG), 173-193 (AWIL…ALAL), 235-255 (FISG…GALF), and 279-299 (IVYL…RVLI).

The protein belongs to the UbiA prenyltransferase family. Protoheme IX farnesyltransferase subfamily.

It localises to the cell inner membrane. The enzyme catalyses heme b + (2E,6E)-farnesyl diphosphate + H2O = Fe(II)-heme o + diphosphate. It participates in porphyrin-containing compound metabolism; heme O biosynthesis; heme O from protoheme: step 1/1. Converts heme B (protoheme IX) to heme O by substitution of the vinyl group on carbon 2 of heme B porphyrin ring with a hydroxyethyl farnesyl side group. This Paraburkholderia xenovorans (strain LB400) protein is Protoheme IX farnesyltransferase.